Here is a 148-residue protein sequence, read N- to C-terminus: Large ribosomal subunit protein bL9 (148 aa).

The protein belongs to the bacterial ribosomal protein bL9 family.

In terms of biological role, binds to the 23S rRNA. In Azotobacter vinelandii (strain DJ / ATCC BAA-1303), this protein is Large ribosomal subunit protein bL9.